The primary structure comprises 414 residues: Enterobactin exporter EntS (414 aa).

Residues 1-21 (MNRQSWLLNLSLLKTHPAFRA) lie on the Cytoplasmic side of the membrane. Residues 22–42 (VFLARFISIVSLGLLGVAVPV) traverse the membrane as a helical segment. The Periplasmic segment spans residues 43-55 (QIQMMTHSTWQVG). Residues 56-76 (LSVTLTGGAMFIGLMVGGVLA) form a helical membrane-spanning segment. The Cytoplasmic segment spans residues 77 to 83 (DRYERKK). Residues 84-104 (VILLARGTCGIGFIGLCVNAL) traverse the membrane as a helical segment. Residues 105-109 (LPEPS) lie on the Periplasmic side of the membrane. The helical transmembrane segment at 110–130 (LLAIYLLGLWDGFFASLGVTA) threads the bilayer. Topologically, residues 131–156 (LLAATPALVGRENLMQAGAITMLTVR) are cytoplasmic. The chain crosses the membrane as a helical span at residues 157-177 (LGSVISPMLGGILLASGGVAW). Position 178 (Asn178) is a topological domain, periplasmic. A helical transmembrane segment spans residues 179–199 (YGLAAAGTFITLLPLLTLPRL). Residues 200-218 (PVPPQPRENPFIALLAAFR) lie on the Cytoplasmic side of the membrane. The chain crosses the membrane as a helical span at residues 219-239 (FLLASPLIGGIALLGGLVTMA). The Periplasmic portion of the chain corresponds to 240–256 (SAVRVLYPALAMSWQMS). Residues 257 to 277 (AAQIGLLYAAIPLGAAIGALT) traverse the membrane as a helical segment. Topologically, residues 278-287 (SGQLAHSVRP) are cytoplasmic. Residues 288–307 (GLIMLVSTVGSFLAVGLFAI) traverse the membrane as a helical segment. The Periplasmic segment spans residues 308–313 (MPIWIA). A helical transmembrane segment spans residues 314-336 (GVICLALFGWLSAISSLLQYTLL). The Cytoplasmic segment spans residues 337–356 (QTQTPENMLGRMNGLWTAQN). The chain crosses the membrane as a helical span at residues 357–377 (VTGDAIGAALLGGLGAMMTPV). Ala378 is a topological domain (periplasmic). A helical membrane pass occupies residues 379 to 399 (SASVSGFGLVIIGLLLLLVLG). The Cytoplasmic portion of the chain corresponds to 400-414 (ELRRFRQTPPVSDAG).

The protein belongs to the major facilitator superfamily. EntS (TC 2.A.1.38) family.

It localises to the cell inner membrane. Component of an export pathway for enterobactin. The sequence is that of Enterobactin exporter EntS from Salmonella typhi.